Here is a 156-residue protein sequence, read N- to C-terminus: Ribosome maturation factor RimP (156 aa).

Belongs to the RimP family.

The protein resides in the cytoplasm. In terms of biological role, required for maturation of 30S ribosomal subunits. The protein is Ribosome maturation factor RimP of Lysinibacillus sphaericus (strain C3-41).